We begin with the raw amino-acid sequence, 127 residues long: Fluoride-specific ion channel FluC 1 (127 aa).

A run of 4 helical transmembrane segments spans residues 4–24 (TLLA…LVSL), 35–55 (VGTL…LALF), 71–91 (TGFC…VYLI), and 101–121 (GTIL…FILV). Na(+) contacts are provided by G75 and T78.

The protein belongs to the fluoride channel Fluc/FEX (TC 1.A.43) family.

The protein resides in the cell inner membrane. The enzyme catalyses fluoride(in) = fluoride(out). Na(+) is not transported, but it plays an essential structural role and its presence is essential for fluoride channel function. In terms of biological role, fluoride-specific ion channel. Important for reducing fluoride concentration in the cell, thus reducing its toxicity. In Yersinia pseudotuberculosis serotype I (strain IP32953), this protein is Fluoride-specific ion channel FluC 1.